The primary structure comprises 370 residues: 4-hydroxy-3-methylbut-2-en-1-yl diphosphate synthase (flavodoxin) (370 aa).

The [4Fe-4S] cluster site is built by Cys268, Cys271, Cys303, and Glu310.

This sequence belongs to the IspG family. It depends on [4Fe-4S] cluster as a cofactor.

The enzyme catalyses (2E)-4-hydroxy-3-methylbut-2-enyl diphosphate + oxidized [flavodoxin] + H2O + 2 H(+) = 2-C-methyl-D-erythritol 2,4-cyclic diphosphate + reduced [flavodoxin]. Its pathway is isoprenoid biosynthesis; isopentenyl diphosphate biosynthesis via DXP pathway; isopentenyl diphosphate from 1-deoxy-D-xylulose 5-phosphate: step 5/6. Converts 2C-methyl-D-erythritol 2,4-cyclodiphosphate (ME-2,4cPP) into 1-hydroxy-2-methyl-2-(E)-butenyl 4-diphosphate. The polypeptide is 4-hydroxy-3-methylbut-2-en-1-yl diphosphate synthase (flavodoxin) (Bacillus cereus (strain G9842)).